A 181-amino-acid chain; its full sequence is ATP synthase subunit delta (181 aa).

Belongs to the ATPase delta chain family. In terms of assembly, F-type ATPases have 2 components, F(1) - the catalytic core - and F(0) - the membrane proton channel. F(1) has five subunits: alpha(3), beta(3), gamma(1), delta(1), epsilon(1). F(0) has three main subunits: a(1), b(2) and c(10-14). The alpha and beta chains form an alternating ring which encloses part of the gamma chain. F(1) is attached to F(0) by a central stalk formed by the gamma and epsilon chains, while a peripheral stalk is formed by the delta and b chains.

The protein localises to the cell membrane. In terms of biological role, f(1)F(0) ATP synthase produces ATP from ADP in the presence of a proton or sodium gradient. F-type ATPases consist of two structural domains, F(1) containing the extramembraneous catalytic core and F(0) containing the membrane proton channel, linked together by a central stalk and a peripheral stalk. During catalysis, ATP synthesis in the catalytic domain of F(1) is coupled via a rotary mechanism of the central stalk subunits to proton translocation. This protein is part of the stalk that links CF(0) to CF(1). It either transmits conformational changes from CF(0) to CF(1) or is implicated in proton conduction. This is ATP synthase subunit delta from Lactiplantibacillus plantarum (strain ATCC BAA-793 / NCIMB 8826 / WCFS1) (Lactobacillus plantarum).